A 460-amino-acid polypeptide reads, in one-letter code: Mogroside I-E synthase (460 aa).

Catalysis depends on histidine 25, which acts as the Proton acceptor. Aspartate 114 (charge relay) is an active-site residue. The UDP-alpha-D-glucose site is built by serine 286, cysteine 339, glutamine 341, tryptophan 359, asparagine 360, serine 361, glutamate 364, aspartate 380, and glutamine 381.

It belongs to the UDP-glycosyltransferase family. As to expression, highly expressed in young fruits 15 days after anthesis (15-DAA).

It catalyses the reaction mogrol + UDP-alpha-D-glucose = mogroside IE + UDP + H(+). The catalysed reaction is mogroside I-A1 + UDP-alpha-D-glucose = mogroside IIE + UDP + H(+). It carries out the reaction mogroside II-A1 + UDP-alpha-D-glucose = mogroside IIIX + UDP + H(+). The enzyme catalyses mogroside II-A + UDP-alpha-D-glucose = mogroside III + UDP + H(+). It catalyses the reaction mogroside III-A1 + UDP-alpha-D-glucose = siamenoside I + UDP + H(+). Its pathway is secondary metabolite biosynthesis; terpenoid biosynthesis. Functionally, UDP-glycosyltransferase involved in the biosynthesis of cucurbitacin and mogroside tetracyclic triterpene natural products (e.g. siamenoside I and mogrosides IV, V and VI). Cucurbitacins have cytotoxic properties and exhibit deterrent taste as a defense barrier against herbivores. Mogrosides are nonsugar highly oxygenated compounds used as high-intensity zero-calorie sweeteners; they also possess pharmacological properties such as regulating immunity, lowering blood sugar and lipid levels, protecting the liver, and acting as antioxidants and antitumor agents. Catalyzes the C3 primary glucosylation of mogrol, mogroside I-A1, mogroside II-A1, mogroside II-A and mogroside III-A1. In Siraitia grosvenorii (Monk's fruit), this protein is Mogroside I-E synthase.